The chain runs to 420 residues: MSSCSRTRTKAPRSARSRRNGGFSSSSATIVADIDDVLIQILSFLPIKTLLRFKRVSKRWLSLITNPVFSNRVIKSNHPLPISGFFLHSPREIKYSFVSLDDDATNQRISSSLPLWFTDHQTDMIIMQSTNGLLLCKCSCASSNHFNTNYYVYNPTTKQYTLLHQIAGHIALSLAFDPSRSPHYKVFCLRGRSNNSFSSASDSELYHIEVYSSNEGLWRRVVPVPTSPSTFIEFSYSVFWNGAVNWYGFSSRDCLSFDINTQEIKILPLPDHEHEDEPLPDPRILMFLDESQGNLYYIEVNNQSSSNLRVYEMESNSSSWSVKYNVDLEPLAAAFPEMIRTEYYTDRRIYAFSVIGFVKEETDAASYILLHIPNQAVKYNFIDKTFKKLCDFKSLVNDAPEDHFYRFQRTFQFIKSLANV.

The tract at residues 1–25 is disordered; the sequence is MSSCSRTRTKAPRSARSRRNGGFSS. Basic residues predominate over residues 7 to 19; sequence TRTKAPRSARSRR. The F-box domain maps to 27 to 77; that stretch reads SATIVADIDDVLIQILSFLPIKTLLRFKRVSKRWLSLITNPVFSNRVIKSN.

This Arabidopsis thaliana (Mouse-ear cress) protein is F-box protein At5g07610.